A 209-amino-acid chain; its full sequence is Neurotrophin-4 (209 aa).

The signal sequence occupies residues 1–21 (MLPRHSCSLLLFLFLLPSVPM). The propeptide occupies 22-79 (EPHPPSSTLPPFLAPEWDLLSPRVALSRGAPAGPPLLFLLEAGAYGEPAGAPANRSRR). N-linked (GlcNAc...) asparagine glycosylation is present at Asn75. Disulfide bonds link Cys96–Cys169, Cys140–Cys198, and Cys157–Cys200.

This sequence belongs to the NGF-beta family.

It is found in the secreted. Its function is as follows. Target-derived survival factor for peripheral sensory sympathetic neurons. May promote ameloblast differentiation and subsequent reduction in proliferation of ameloblasts. This Mus musculus (Mouse) protein is Neurotrophin-4 (Ntf4).